We begin with the raw amino-acid sequence, 331 residues long: Adenosine deaminase (331 aa).

Zn(2+) is bound by residues histidine 12 and histidine 14. Histidine 14, aspartate 16, and glycine 170 together coordinate substrate. Zn(2+) is bound at residue histidine 197. The active-site Proton donor is the glutamate 200. Aspartate 278 is a binding site for Zn(2+). Aspartate 279 lines the substrate pocket.

Belongs to the metallo-dependent hydrolases superfamily. Adenosine and AMP deaminases family. Adenosine deaminase subfamily. The cofactor is Zn(2+).

The catalysed reaction is adenosine + H2O + H(+) = inosine + NH4(+). It carries out the reaction 2'-deoxyadenosine + H2O + H(+) = 2'-deoxyinosine + NH4(+). Functionally, catalyzes the hydrolytic deamination of adenosine and 2-deoxyadenosine. The polypeptide is Adenosine deaminase (Shewanella denitrificans (strain OS217 / ATCC BAA-1090 / DSM 15013)).